A 179-amino-acid chain; its full sequence is Large ribosomal subunit protein uL5 (179 aa).

The protein belongs to the universal ribosomal protein uL5 family. Part of the 50S ribosomal subunit; part of the 5S rRNA/L5/L18/L25 subcomplex. Contacts the 5S rRNA and the P site tRNA. Forms a bridge to the 30S subunit in the 70S ribosome.

Functionally, this is one of the proteins that bind and probably mediate the attachment of the 5S RNA into the large ribosomal subunit, where it forms part of the central protuberance. In the 70S ribosome it contacts protein S13 of the 30S subunit (bridge B1b), connecting the 2 subunits; this bridge is implicated in subunit movement. Contacts the P site tRNA; the 5S rRNA and some of its associated proteins might help stabilize positioning of ribosome-bound tRNAs. In Alkaliphilus metalliredigens (strain QYMF), this protein is Large ribosomal subunit protein uL5.